Here is a 407-residue protein sequence, read N- to C-terminus: M protein, serotype 2.1 (407 aa).

Residues 1–41 (MARKDTNKQYSLRKLKTGTASVAVAVAVLGAGFANQTTVKA) form the signal peptide. The tract at residues 81-94 (VEEEHKKVEEEHKK) is 2 X 7 AA tandem repeats. Basic and acidic residues-rich tracts occupy residues 83-144 (EEHK…KRYQ), 152-229 (QLEK…EKQI), 237-264 (LSRD…EKQI), and 272-288 (LSRD…KVEA). The interval 83–289 (EEHKKVEEEH…REAKKKVEAD (207 aa)) is disordered. C repeat units follow at residues 151-185 (QQLE…EAEH), 186-220 (QKLK…EAEH), 221-255 (QKLK…EAEH), and 256-290 (QKLK…EADL). D repeat units follow at residues 323–328 (AKLEAE), 329–334 (AKALKE), 337–342 (AKQAEE), and 344–349 (AKLKGN). The tract at residues 344–382 (AKLKGNQTPNAKVAPQANRSRSAMTQQKRTLPSTGETAN) is disordered. Residues 360–380 (ANRSRSAMTQQKRTLPSTGET) are compositionally biased toward polar residues. Positions 374-378 (LPSTG) match the LPXTG sorting signal motif. Residue Thr377 is modified to Pentaglycyl murein peptidoglycan amidated threonine. Positions 378–407 (GETANPFFTAAAATVMVSAGMLALKRKEEN) are cleaved as a propeptide — removed by sortase.

It belongs to the M protein family.

It localises to the secreted. Its subcellular location is the cell wall. This protein is one of the different antigenic serotypes of protein M. Protein M is closely associated with virulence of the bacterium and can render the organism resistant to phagocytosis. This chain is M protein, serotype 2.1 (emmL2.1), found in Streptococcus pyogenes.